We begin with the raw amino-acid sequence, 628 residues long: Vacuolar-sorting receptor 4 (628 aa).

The N-terminal stretch at 1–24 (MKQLLCYLPWLLLLSLVVSPFNEA) is a signal peptide. Residues 25–569 (RFVVEKNSLS…SKTGSQVKSA (545 aa)) are Lumenal-facing. Residues 56–168 (QYGGSMAGTV…GFGEKLKKAI (113 aa)) form the PA domain. 3 N-linked (GlcNAc...) asparagine glycosylation sites follow: N148, N294, and N434. 2 consecutive EGF-like domains span residues 416-466 (ETNE…SHCE) and 469-516 (GPGR…KKCE). Disulfide bonds link C420/C438, C427/C447, C449/C465, C473/C493, C480/C501, C503/C515, and C545/C558. In terms of domain architecture, EGF-like 3; calcium-binding spans 517 to 559 (DINECKEKKACQCPECSCKNTWGSYECSCSGDLLYMRDHDTCI). The helical transmembrane segment at 570-590 (WAAVWLIMLSLGLAAAGAYLV) threads the bilayer. At 591–628 (YKYRLRQYMDSEIRAIMAQYMPLDSQPEVPNHTNDERA) the chain is on the cytoplasmic side. A Tyrosine-based internalization motif motif is present at residues 610–613 (YMPL).

Belongs to the VSR (BP-80) family. As to expression, expressed at low levels in seeds, seedlings, roots, stems, leaves, flowers and siliques.

It is found in the membrane. The protein resides in the golgi apparatus membrane. The protein localises to the cytoplasmic vesicle. It localises to the clathrin-coated vesicle membrane. Its subcellular location is the prevacuolar compartment membrane. Functionally, vacuolar-sorting receptor (VSR) involved in clathrin-coated vesicles sorting from Golgi apparatus to vacuoles. The chain is Vacuolar-sorting receptor 4 (VSR4) from Arabidopsis thaliana (Mouse-ear cress).